Reading from the N-terminus, the 143-residue chain is Transcription antitermination protein NusB (143 aa).

The protein belongs to the NusB family.

Its function is as follows. Involved in transcription antitermination. Required for transcription of ribosomal RNA (rRNA) genes. Binds specifically to the boxA antiterminator sequence of the ribosomal RNA (rrn) operons. The sequence is that of Transcription antitermination protein NusB from Streptomyces griseus subsp. griseus (strain JCM 4626 / CBS 651.72 / NBRC 13350 / KCC S-0626 / ISP 5235).